The sequence spans 369 residues: Gibberellin 3-beta-dioxygenase 2-3 (369 aa).

One can recognise a Fe2OG dioxygenase domain in the interval 205 to 306 (MTATMHLNWY…RISLGYFLGP (102 aa)). Residues His-229, Asp-231, and His-287 each coordinate Fe cation. The active site involves Arg-297.

It belongs to the iron/ascorbate-dependent oxidoreductase family. GA3OX subfamily. L-ascorbate serves as cofactor. Fe cation is required as a cofactor.

The catalysed reaction is gibberellin A20 + 2-oxoglutarate + O2 = gibberellin A1 + succinate + CO2. Functionally, converts the inactive gibberellin precursors GA9 and GA20 in the bioactives gibberellins GA4 and GA1. This Triticum aestivum (Wheat) protein is Gibberellin 3-beta-dioxygenase 2-3 (GA3ox2-3).